Here is a 154-residue protein sequence, read N- to C-terminus: Transcriptional repressor NrdR (154 aa).

A zinc finger spans residues 3 to 34 (CPFCGANDTKVIDSRLVAEGEQVRRRRECLAC). One can recognise an ATP-cone domain in the interval 49-139 (PRLIKTDGSR…VYRRFQDLNE (91 aa)).

Belongs to the NrdR family. Zn(2+) serves as cofactor.

Functionally, negatively regulates transcription of bacterial ribonucleotide reductase nrd genes and operons by binding to NrdR-boxes. This is Transcriptional repressor NrdR from Pseudomonas fluorescens (strain ATCC BAA-477 / NRRL B-23932 / Pf-5).